The primary structure comprises 237 residues: MNIEDIFANNRTRSCEYRRERRTVSLRRAIELCNGEGRRGLIAEYKRRSPSGFSTDEDISSYLSYVKMHRIAGLSILSEPTHFSGSFDDVTLAHRIGVPVLVKDFAPDDHFVESAYNAGGDAVLAILDFLPSEDVERIVRRSADLGMDVIEEYHDRKALKKFVDGDNVILGYNRRDLVSLKTGEDQDMPQYDITILESGINIDNVVHVDMRYSGFLIGTSILKRDGTLEYLEKNRII.

The protein belongs to the TrpC family.

The enzyme catalyses 1-(2-carboxyphenylamino)-1-deoxy-D-ribulose 5-phosphate + H(+) = (1S,2R)-1-C-(indol-3-yl)glycerol 3-phosphate + CO2 + H2O. The protein operates within amino-acid biosynthesis; L-tryptophan biosynthesis; L-tryptophan from chorismate: step 4/5. This is Indole-3-glycerol phosphate synthase (trpC) from Thermoplasma acidophilum (strain ATCC 25905 / DSM 1728 / JCM 9062 / NBRC 15155 / AMRC-C165).